Here is a 323-residue protein sequence, read N- to C-terminus: Serine/threonine-protein kinase-transforming protein raf (323 aa).

The region spanning valine 24–leucine 284 is the Protein kinase domain. ATP is bound by residues isoleucine 30 to valine 38 and lysine 50. Aspartate 143 functions as the Proton acceptor in the catalytic mechanism.

This sequence belongs to the protein kinase superfamily. TKL Ser/Thr protein kinase family. RAF subfamily.

The enzyme catalyses L-seryl-[protein] + ATP = O-phospho-L-seryl-[protein] + ADP + H(+). It catalyses the reaction L-threonyl-[protein] + ATP = O-phospho-L-threonyl-[protein] + ADP + H(+). The sequence is that of Serine/threonine-protein kinase-transforming protein raf (V-RAF) from Murine sarcoma virus 3611.